A 371-amino-acid chain; its full sequence is Chaperone protein DnaJ (371 aa).

Residues D4–G68 form the J domain. The CR-type zinc-finger motif lies at G134 to Q212. Zn(2+)-binding residues include C147, C150, C164, C167, C186, C189, C200, and C203. CXXCXGXG motif repeat units lie at residues C147–G154, C164–G171, C186–G193, and C200–G207.

This sequence belongs to the DnaJ family. As to quaternary structure, homodimer. The cofactor is Zn(2+).

Its subcellular location is the cytoplasm. Its function is as follows. Participates actively in the response to hyperosmotic and heat shock by preventing the aggregation of stress-denatured proteins and by disaggregating proteins, also in an autonomous, DnaK-independent fashion. Unfolded proteins bind initially to DnaJ; upon interaction with the DnaJ-bound protein, DnaK hydrolyzes its bound ATP, resulting in the formation of a stable complex. GrpE releases ADP from DnaK; ATP binding to DnaK triggers the release of the substrate protein, thus completing the reaction cycle. Several rounds of ATP-dependent interactions between DnaJ, DnaK and GrpE are required for fully efficient folding. Also involved, together with DnaK and GrpE, in the DNA replication of plasmids through activation of initiation proteins. In Rickettsia felis (strain ATCC VR-1525 / URRWXCal2) (Rickettsia azadi), this protein is Chaperone protein DnaJ.